We begin with the raw amino-acid sequence, 264 residues long: Thymidylate synthase (264 aa).

Arginine 21 lines the dUMP pocket. (6R)-5,10-methylene-5,6,7,8-tetrahydrofolate is bound at residue histidine 51. 126 to 127 (RR) lines the dUMP pocket. The Nucleophile role is filled by cysteine 146. Residues 166 to 169 (RSCD), asparagine 177, and 207 to 209 (HLY) each bind dUMP. Aspartate 169 serves as a coordination point for (6R)-5,10-methylene-5,6,7,8-tetrahydrofolate. Residue alanine 263 coordinates (6R)-5,10-methylene-5,6,7,8-tetrahydrofolate.

The protein belongs to the thymidylate synthase family. Bacterial-type ThyA subfamily. In terms of assembly, homodimer.

The protein resides in the cytoplasm. It carries out the reaction dUMP + (6R)-5,10-methylene-5,6,7,8-tetrahydrofolate = 7,8-dihydrofolate + dTMP. It participates in pyrimidine metabolism; dTTP biosynthesis. In terms of biological role, catalyzes the reductive methylation of 2'-deoxyuridine-5'-monophosphate (dUMP) to 2'-deoxythymidine-5'-monophosphate (dTMP) while utilizing 5,10-methylenetetrahydrofolate (mTHF) as the methyl donor and reductant in the reaction, yielding dihydrofolate (DHF) as a by-product. This enzymatic reaction provides an intracellular de novo source of dTMP, an essential precursor for DNA biosynthesis. The polypeptide is Thymidylate synthase (Shigella boydii serotype 4 (strain Sb227)).